The primary structure comprises 169 residues: Small proline-rich protein 3 (169 aa).

Residues 1–24 (MSSYQQKQTFTPPPQLQQQQVKQP) show a composition bias toward low complexity. A disordered region spans residues 1 to 57 (MSSYQQKQTFTPPPQLQQQQVKQPSQPPPQEIFVPTTKEPCHSKVPQPGNTKIPEPG). N-acetylserine is present on Ser-2. 14 tandem repeats follow at residues 43–50 (SKVPQPGN), 51–58 (TKIPEPGC), 59–66 (TKVPEPGC), 67–74 (TKVPEPGC), 75–82 (TKVPEPGC), 83–90 (TKVPEPGC), 91–98 (TKVPEPGC), 99–106 (TKVPEPGY), 107–114 (TKVPEPGS), 115–122 (IKVPDQGF), 123–130 (IKFPEPGA), 131–138 (IKVPEQGY), 139–146 (TKVPVPGY), and 147–154 (TKLPEPCP). Residues 43-154 (SKVPQPGNTK…GYTKLPEPCP (112 aa)) form a 14 X 8 AA approximate tandem repeats region. Residues 150–169 (PEPCPSTVTPGPAQQKTKQK) form a disordered region. The segment covering 155–169 (STVTPGPAQQKTKQK) has biased composition (polar residues).

The protein localises to the cytoplasm. Cross-linked envelope protein of keratinocytes. The chain is Small proline-rich protein 3 (SPRR3) from Homo sapiens (Human).